We begin with the raw amino-acid sequence, 572 residues long: Sulfite reductase [NADPH] hemoprotein beta-component (572 aa).

4 residues coordinate [4Fe-4S] cluster: Cys-437, Cys-443, Cys-482, and Cys-486. A siroheme-binding site is contributed by Cys-486.

The protein belongs to the nitrite and sulfite reductase 4Fe-4S domain family. As to quaternary structure, alpha(8)-beta(8). The alpha component is a flavoprotein, the beta component is a hemoprotein. It depends on siroheme as a cofactor. Requires [4Fe-4S] cluster as cofactor.

It carries out the reaction hydrogen sulfide + 3 NADP(+) + 3 H2O = sulfite + 3 NADPH + 4 H(+). It participates in sulfur metabolism; hydrogen sulfide biosynthesis; hydrogen sulfide from sulfite (NADPH route): step 1/1. In terms of biological role, component of the sulfite reductase complex that catalyzes the 6-electron reduction of sulfite to sulfide. This is one of several activities required for the biosynthesis of L-cysteine from sulfate. In Staphylococcus epidermidis (strain ATCC 12228 / FDA PCI 1200), this protein is Sulfite reductase [NADPH] hemoprotein beta-component.